The chain runs to 383 residues: 8-amino-7-oxononanoate synthase (383 aa).

A substrate-binding site is contributed by Arg-21. 108 to 109 is a pyridoxal 5'-phosphate binding site; it reads GF. His-133 lines the substrate pocket. Residues Ser-179, His-207, and Thr-233 each contribute to the pyridoxal 5'-phosphate site. Lys-236 is subject to N6-(pyridoxal phosphate)lysine. Thr-350 contributes to the substrate binding site.

It belongs to the class-II pyridoxal-phosphate-dependent aminotransferase family. BioF subfamily. In terms of assembly, homodimer. It depends on pyridoxal 5'-phosphate as a cofactor.

It carries out the reaction 6-carboxyhexanoyl-[ACP] + L-alanine + H(+) = (8S)-8-amino-7-oxononanoate + holo-[ACP] + CO2. It functions in the pathway cofactor biosynthesis; biotin biosynthesis. Catalyzes the decarboxylative condensation of pimeloyl-[acyl-carrier protein] and L-alanine to produce 8-amino-7-oxononanoate (AON), [acyl-carrier protein], and carbon dioxide. This is 8-amino-7-oxononanoate synthase from Yersinia enterocolitica serotype O:8 / biotype 1B (strain NCTC 13174 / 8081).